An 89-amino-acid polypeptide reads, in one-letter code: Small ribosomal subunit protein uS15 (89 aa).

Belongs to the universal ribosomal protein uS15 family. Part of the 30S ribosomal subunit. Forms a bridge to the 50S subunit in the 70S ribosome, contacting the 23S rRNA.

Its function is as follows. One of the primary rRNA binding proteins, it binds directly to 16S rRNA where it helps nucleate assembly of the platform of the 30S subunit by binding and bridging several RNA helices of the 16S rRNA. In terms of biological role, forms an intersubunit bridge (bridge B4) with the 23S rRNA of the 50S subunit in the ribosome. This is Small ribosomal subunit protein uS15 from Chromohalobacter salexigens (strain ATCC BAA-138 / DSM 3043 / CIP 106854 / NCIMB 13768 / 1H11).